We begin with the raw amino-acid sequence, 532 residues long: Membrane protein insertase YidC (532 aa).

Helical transmembrane passes span 7–27, 336–356, 413–433, 450–470, and 492–512; these read FFIF…QSQM, LTIL…ITFI, GGFL…YMLI, LSSQ…MFFI, and PVIF…YYII.

This sequence belongs to the OXA1/ALB3/YidC family. Type 1 subfamily. As to quaternary structure, interacts with the Sec translocase complex via SecD. Specifically interacts with transmembrane segments of nascent integral membrane proteins during membrane integration.

Its subcellular location is the cell membrane. Its function is as follows. Required for the insertion and/or proper folding and/or complex formation of integral membrane proteins into the membrane. Involved in integration of membrane proteins that insert both dependently and independently of the Sec translocase complex, as well as at least some lipoproteins. Aids folding of multispanning membrane proteins. The polypeptide is Membrane protein insertase YidC (Buchnera aphidicola subsp. Acyrthosiphon pisum (strain Tuc7)).